Consider the following 373-residue polypeptide: Protein translocase subunit SecF (373 aa).

A run of 6 helical transmembrane segments spans residues 26–46 (IWYG…AVRG), 142–162 (WQGL…AFEW), 166–186 (LAAF…YALV), 193–213 (GTVI…VVVF), 251–271 (VVAL…LGAG), and 280–300 (LFVG…PLVA). The span at 322 to 332 (QGAAKGESAES) shows a compositional bias: low complexity. A disordered region spans residues 322–373 (QGAAKGESAESAADEGAYDADEPDDAAPAVVGPRNQPASRGRGRGRPSGKRR). Acidic residues predominate over residues 333–346 (AADEGAYDADEPDD). The span at 362-373 (GRGRGRPSGKRR) shows a compositional bias: basic residues.

The protein belongs to the SecD/SecF family. SecF subfamily. As to quaternary structure, forms a complex with SecD. Part of the essential Sec protein translocation apparatus which comprises SecA, SecYEG and auxiliary proteins SecDF. Other proteins may also be involved.

The protein localises to the cell membrane. Functionally, part of the Sec protein translocase complex. Interacts with the SecYEG preprotein conducting channel. SecDF uses the proton motive force (PMF) to complete protein translocation after the ATP-dependent function of SecA. The chain is Protein translocase subunit SecF from Streptomyces coelicolor (strain ATCC BAA-471 / A3(2) / M145).